The primary structure comprises 313 residues: 3'-5' exoribonuclease YhaM (313 aa).

The segment at residues 22–90 (SSVKGTASNG…QLKIRQIRQA (69 aa)) is a DNA-binding region (OB). The 117-residue stretch at 163–279 (HVVSMLRLAK…LHQIDLMDAS (117 aa)) folds into the HD domain.

This sequence belongs to the YhaM family.

Shows a 3'-5' exoribonuclease activity. The sequence is that of 3'-5' exoribonuclease YhaM from Listeria innocua serovar 6a (strain ATCC BAA-680 / CLIP 11262).